A 324-amino-acid chain; its full sequence is Glyoxylate/hydroxypyruvate reductase B (324 aa).

Active-site residues include Arg-237 and Glu-266. Residue His-285 is the Proton donor of the active site.

This sequence belongs to the D-isomer specific 2-hydroxyacid dehydrogenase family. GhrB subfamily. Homodimer.

Its subcellular location is the cytoplasm. The enzyme catalyses glycolate + NADP(+) = glyoxylate + NADPH + H(+). The catalysed reaction is (R)-glycerate + NAD(+) = 3-hydroxypyruvate + NADH + H(+). It catalyses the reaction (R)-glycerate + NADP(+) = 3-hydroxypyruvate + NADPH + H(+). Functionally, catalyzes the NADPH-dependent reduction of glyoxylate and hydroxypyruvate into glycolate and glycerate, respectively. In Salmonella paratyphi A (strain ATCC 9150 / SARB42), this protein is Glyoxylate/hydroxypyruvate reductase B.